The following is an 800-amino-acid chain: Protein PET111, mitochondrial (800 aa).

To yeast YHR160C.

Its subcellular location is the mitochondrion matrix. In terms of biological role, required for translation of the mitochondrial gene for cytochrome c oxidase subunit II (COX2). The sequence is that of Protein PET111, mitochondrial (PET111) from Saccharomyces cerevisiae (strain ATCC 204508 / S288c) (Baker's yeast).